The primary structure comprises 122 residues: Large ribosomal subunit protein bL12 (122 aa).

This sequence belongs to the bacterial ribosomal protein bL12 family. As to quaternary structure, homodimer. Part of the ribosomal stalk of the 50S ribosomal subunit. Forms a multimeric L10(L12)X complex, where L10 forms an elongated spine to which 2 to 4 L12 dimers bind in a sequential fashion. Binds GTP-bound translation factors.

In terms of biological role, forms part of the ribosomal stalk which helps the ribosome interact with GTP-bound translation factors. Is thus essential for accurate translation. This is Large ribosomal subunit protein bL12 from Vibrio vulnificus (strain CMCP6).